The sequence spans 267 residues: GRYTVQNQWGGSSAPWNDAGLWLLGSRANQNVMDVSVTSSDGGATLTGTMTYSGEGPIGFKGTRRGDSNNYDVENQWGGSSAPWHAGGTFVIGSRSGQGVVAVDVNSSDGGKTLTGTMTYANEGPIGFKGTQSGGDSYNVENQWGGSSAPWNKAGAWALGDRDGQGVIGVDVTSSDGGKTLTGTMQYQNEGPIGFKGTSTGGSNYKVENQWGGSSAPWNPAGNWLIGDRHNQNIVAVKVTSSDNGKTLGGTCTYEREGPIGFKGTAI.

4 consecutive repeat copies span residues 1 to 67 (GRYT…RRGD), 68 to 135 (SNNY…QSGG), 136 to 202 (DSYN…STGG), and 203 to 267 (SNYK…GTAI). The segment at 1 to 267 (GRYTVQNQWG…GPIGFKGTAI (267 aa)) is 4 X approximate tandem repeats.

In terms of assembly, monomer.

In terms of biological role, lectin specific for high mannose N-glycans, recognizes the branched moiety of these glycans. Does not recognize other types of N-glycans or monosaccharides. The polypeptide is Lectin SfL-1 (Solieria filiformis (Red alga)).